The sequence spans 381 residues: Cobalt-precorrin-5B C(1)-methyltransferase (381 aa).

This sequence belongs to the CbiD family.

It carries out the reaction Co-precorrin-5B + S-adenosyl-L-methionine = Co-precorrin-6A + S-adenosyl-L-homocysteine. The protein operates within cofactor biosynthesis; adenosylcobalamin biosynthesis; cob(II)yrinate a,c-diamide from sirohydrochlorin (anaerobic route): step 6/10. In terms of biological role, catalyzes the methylation of C-1 in cobalt-precorrin-5B to form cobalt-precorrin-6A. The polypeptide is Cobalt-precorrin-5B C(1)-methyltransferase (Prochlorococcus marinus (strain SARG / CCMP1375 / SS120)).